A 429-amino-acid polypeptide reads, in one-letter code: ATP-sensitive inward rectifier potassium channel 12 (429 aa).

At 1–76 (MTAGRVNPYS…IADMFTTCVD (76 aa)) the chain is on the cytoplasmic side. Residues 77 to 103 (IRWRYMLLLFSLAFLVSWLLFGLIFWL) form a helical membrane-spanning segment. 2 residues coordinate a 1,2-diacyl-sn-glycero-3-phospho-(1D-myo-inositol-4,5-bisphosphate): Arg78 and Arg80. The Extracellular portion of the chain corresponds to 104–129 (IALIHGDLENPGGDDTFKPCVLQVNG). Cys123 and Cys155 are oxidised to a cystine. The helical; Pore-forming intramembrane region spans 130–146 (FVAAFLFSIETQTTIGY). Positions 143, 144, 145, and 146 each coordinate K(+). Positions 143–148 (TIGYGF) match the Selectivity filter motif. Over 147-155 (GFRCVTEEC) the chain is Extracellular. The chain crosses the membrane as a helical span at residues 156 to 183 (PLAVFMVVVQSIVGCIIDSFMIGAIMAK). 2 residues coordinate a 1,2-diacyl-sn-glycero-3-phospho-(1D-myo-inositol-4,5-bisphosphate): Lys183 and Lys188. The Cytoplasmic segment spans residues 184–429 (MARPKKRAQT…QRSYRRESEI (246 aa)). The tract at residues 386-407 (RDEDEEDDDSRGLDDLSPDNRH) is disordered. Residues 395–407 (SRGLDDLSPDNRH) show a composition bias toward basic and acidic residues.

The protein belongs to the inward rectifier-type potassium channel family. Homotetramer.

It localises to the membrane. It is found in the cell membrane. The protein localises to the sarcolemma. The protein resides in the T-tubule. It catalyses the reaction K(+)(in) = K(+)(out). Its activity is regulated as follows. Activated by phosphatidylinositol 4,5-bisphosphate (PtdIns(4,5)P2). PtdIns(4,5)P2 binding to the cytoplasmic side of the channel triggers a conformation change leading to channel opening. Functionally, inward rectifying potassium channel that probably participates in controlling the resting membrane potential in electrically excitable cells. Probably participates in establishing action potential waveform and excitability of neuronal and muscle tissues. Inward rectifier potassium channels are characterized by a greater tendency to allow potassium to flow into the cell rather than out of it. Their voltage dependence is regulated by the concentration of extracellular potassium; as external potassium is raised, the voltage range of the channel opening shifts to more positive voltages. The inward rectification is mainly due to the blockage of outward current by internal magnesium. This Gallus gallus (Chicken) protein is ATP-sensitive inward rectifier potassium channel 12 (KCNJ12).